We begin with the raw amino-acid sequence, 33 residues long: GLFSVVTGVLKAVGKNVAGSLLEQLKCKISGGC.

A disulfide bridge connects residues Cys27 and Cys33.

Belongs to the frog skin active peptide (FSAP) family. Brevinin subfamily. Expressed by the skin glands.

It is found in the secreted. Functionally, antimicrobial peptide. The chain is Brevinin-2CDYb from Rana dybowskii (Dybovsky's frog).